Here is a 664-residue protein sequence, read N- to C-terminus: MASSDALLPISAREEEPLCPYTRLPMADPNQETHGPRRRRPFKGLLAVSFGLLFIAFYVALIATHDGSRSNDEGIDETETITSRARLAGVSEKRNDGLWKLSGDRNTPAFEWNNSMLSWQRTAFHFQPEQNWMNDPNGPLFYKGWYHFFYQYNPNAAVWGDIVWGHAVSRDLIHWVHLPIAMVADQWYDSNGVWTGSATFLPDGSIVMLYTGSTDKAVQVQNLAYPEDPNDPLLLKWVKFPGNPVLVPPPGILPKDFRDPTTAWKTSEGKWRITIGSKLNKTGISLVYDTIDFKTYEKLDTLLHRVPNTGMWECVDFYPVSKTAGNGLDTSVNGPDVKHIVKASMDDTRFDHYAVGTYFDSNGTWIPDDPTIDVGMTASLRYDYGKFYASKSFYDQNKGRRVLWSWIGESDSEASDVQKGWSSLQGIPRTVVLDTKTGKNLVQWPVEEIKSLRLSSKQFDLEVGPGSVVPVDVGSAAQLDIEAEFEINKESLDKIIGNASVVAEAEEFSCEKSGGSTVRGALGPFGFSVLATESLSEQTPVYFYVAKGKDSELKTFFCTDTSRSSVANDVVKPIYGSVVPVLKGEKLTMRILVDHSIVEAFGQGGRTCITSRVYPTTAIYGAAKLFLFNNALDATVTASFTVWQMNSAFIHPYSDEAVRALSRT.

Residues 1-43 (MASSDALLPISAREEEPLCPYTRLPMADPNQETHGPRRRRPFK) lie on the Cytoplasmic side of the membrane. The propeptide at 1-108 (MASSDALLPI…WKLSGDRNTP (108 aa)) is removed in mature form. 2 consecutive short sequence motifs (critical for endoplasmic reticulum export) follow at residues 7 to 8 (LL) and 9 to 10 (PI). The short motif at 14-16 (EEE) is the Critical for trafficking from the trans-Golgi network to the prevacuolar compartment and from the prevacuolar compartment to the central vacuole element. The helical; Signal-anchor for type II membrane protein transmembrane segment at 44–64 (GLLAVSFGLLFIAFYVALIAT) threads the bilayer. Residues 65–664 (HDGSRSNDEG…DEAVRALSRT (600 aa)) are Lumenal-facing. A glycan (N-linked (GlcNAc...) asparagine) is linked at asparagine 113. Substrate is bound by residues 132-135 (WMND), glutamine 151, tryptophan 159, 194-195 (WT), and 258-259 (RD). Aspartate 135 is an active-site residue. Residue asparagine 280 is glycosylated (N-linked (GlcNAc...) (complex) asparagine). Residues glutamate 313 and aspartate 346 each contribute to the substrate site. Residues asparagine 362 and asparagine 498 are each glycosylated (N-linked (GlcNAc...) asparagine). The cysteines at positions 510 and 558 are disulfide-linked.

The protein belongs to the glycosyl hydrolase 32 family. In terms of assembly, may be present in two forms, a 70 kDa monomer and a heterodimer of the 30 kDa and 38 kDa subunits. The ratio of the levels of the two forms within cells appears to be regulated developmentally. As to expression, mostly expressed in stems, roots and flowers, and, to a lower extent, in mature leaves.

The protein localises to the vacuole. Its subcellular location is the endoplasmic reticulum membrane. The protein resides in the golgi apparatus membrane. It localises to the golgi apparatus. It is found in the trans-Golgi network membrane. The protein localises to the prevacuolar compartment membrane. Its subcellular location is the vacuole membrane. The protein resides in the vacuole lumen. It catalyses the reaction Hydrolysis of terminal non-reducing beta-D-fructofuranoside residues in beta-D-fructofuranosides.. It functions in the pathway glycan biosynthesis; sucrose metabolism. Its activity is regulated as follows. Inhibited by C/VIF1 and C/VIF2. In terms of biological role, possible role in the continued mobilization of sucrose to sink organs. Regulates root elongation. The polypeptide is Acid beta-fructofuranosidase 4, vacuolar (Arabidopsis thaliana (Mouse-ear cress)).